A 130-amino-acid chain; its full sequence is Small ribosomal subunit protein uS8 (130 aa).

This sequence belongs to the universal ribosomal protein uS8 family. In terms of assembly, part of the 30S ribosomal subunit. Contacts proteins S5 and S12.

One of the primary rRNA binding proteins, it binds directly to 16S rRNA central domain where it helps coordinate assembly of the platform of the 30S subunit. In Pseudoalteromonas atlantica (strain T6c / ATCC BAA-1087), this protein is Small ribosomal subunit protein uS8.